The primary structure comprises 293 residues: N-acetylneuraminate lyase (293 aa).

Positions 48 and 49 each coordinate aceneuramate. Y137 (proton donor) is an active-site residue. K165 functions as the Schiff-base intermediate with substrate in the catalytic mechanism. Positions 167, 189, 191, 192, and 208 each coordinate aceneuramate.

This sequence belongs to the DapA family. NanA subfamily. Homotetramer.

Its subcellular location is the cytoplasm. It catalyses the reaction aceneuramate = aldehydo-N-acetyl-D-mannosamine + pyruvate. It functions in the pathway amino-sugar metabolism; N-acetylneuraminate degradation; D-fructose 6-phosphate from N-acetylneuraminate: step 1/5. Its function is as follows. Catalyzes the reversible aldol cleavage of N-acetylneuraminic acid (sialic acid; Neu5Ac) to form pyruvate and N-acetylmannosamine (ManNAc) via a Schiff base intermediate. This chain is N-acetylneuraminate lyase, found in Staphylococcus carnosus (strain TM300).